Reading from the N-terminus, the 1521-residue chain is Lysophospholipase NTE1 (1521 aa).

Topologically, residues Met-1 to Ser-50 are cytoplasmic. Residues Trp-51–Tyr-71 traverse the membrane as a helical segment. Residues Tyr-72–Thr-96 lie on the Lumenal side of the membrane. Residues Met-97 to Val-117 traverse the membrane as a helical segment. Topologically, residues Arg-118–Ile-1521 are cytoplasmic. 3 disordered regions span residues His-280–Pro-301, Ser-315–Pro-372, and His-738–Asp-768. Composition is skewed to polar residues over residues Val-316 to Pro-334 and His-738 to Pro-753. Residues Pro-670 to Ala-789 and Arg-837 to Arg-957 contribute to the a nucleoside 3',5'-cyclic phosphate site. The 165-residue stretch at Leu-1217–Lys-1381 folds into the PNPLA domain. The GXGXXG motif lies at Gly-1221–Gly-1226. Positions Gly-1248–Gly-1252 match the GXSXG motif. Catalysis depends on Ser-1250, which acts as the Nucleophile. Catalysis depends on Asp-1368, which acts as the Proton acceptor. Residues Asp-1368–Gly-1370 carry the DGA/G motif.

It belongs to the NTE family.

Its subcellular location is the endoplasmic reticulum membrane. The catalysed reaction is a 1-acyl-sn-glycero-3-phosphocholine + H2O = sn-glycerol 3-phosphocholine + a fatty acid + H(+). Its activity is regulated as follows. Inhibited by organophosphorus esters. Functionally, intracellular phospholipase B that catalyzes the double deacylation of phosphatidylcholine (PC) to glycerophosphocholine (GroPCho). Plays an important role in membrane lipid homeostasis. Responsible for the rapid PC turnover in response to inositol, elevated temperatures, or when choline is present in the growth medium. The sequence is that of Lysophospholipase NTE1 (NTE1) from Chaetomium globosum (strain ATCC 6205 / CBS 148.51 / DSM 1962 / NBRC 6347 / NRRL 1970) (Soil fungus).